Here is a 311-residue protein sequence, read N- to C-terminus: MAITAAQINELRKATGAGMLDCKKALEEVDGDMEQAVDYLRKKGLAAASKKAGRAATEGMVAAAVTANGNAGVLVEINSETDFVAKNDKFQDFVKQVADHVLQKNPANIEELMAQPFAGDASKTVQTLLNEAIAVIGENMQIRRFVSFSADGGAVGSYIHAGGKIGVLVEATCDKADVCSSEAFATVLKDVAMHTAAASPQFLCREDVSADVLEREKEIYRAKARETGKPDNIIEKIIGGQVNKFYGDICLLEQVYVKDTDKTVQQYIDASAKQLGCSITLKRFAKFVLGEGLEKKESDFAAEVAAAAGLK.

The tract at residues 81 to 84 (TDFV) is involved in Mg(2+) ion dislocation from EF-Tu.

The protein belongs to the EF-Ts family.

The protein localises to the cytoplasm. Its function is as follows. Associates with the EF-Tu.GDP complex and induces the exchange of GDP to GTP. It remains bound to the aminoacyl-tRNA.EF-Tu.GTP complex up to the GTP hydrolysis stage on the ribosome. The sequence is that of Elongation factor Ts from Trichlorobacter lovleyi (strain ATCC BAA-1151 / DSM 17278 / SZ) (Geobacter lovleyi).